A 131-amino-acid chain; its full sequence is Large ribosomal subunit protein bL12 (131 aa).

It belongs to the bacterial ribosomal protein bL12 family. In terms of assembly, homodimer. Part of the ribosomal stalk of the 50S ribosomal subunit. Forms a multimeric L10(L12)X complex, where L10 forms an elongated spine to which 2 to 4 L12 dimers bind in a sequential fashion. Binds GTP-bound translation factors.

Functionally, forms part of the ribosomal stalk which helps the ribosome interact with GTP-bound translation factors. Is thus essential for accurate translation. This chain is Large ribosomal subunit protein bL12, found in Prochlorococcus marinus (strain MIT 9301).